Consider the following 368-residue polypeptide: Protein pxr1 (368 aa).

Disordered stretches follow at residues 1 to 28 and 161 to 339; these read MGLAAPKNKIKLSHDPNNTRWSGNTDSF and KEKA…PMGI. The segment covering 15–27 has biased composition (polar residues); sequence DPNNTRWSGNTDS. Positions 25-79 constitute a G-patch domain; that stretch reads TDSFGHRMMKSQGWTPGEYLGAKDAAHAEFHTEANASHIRVVIKDNTLGLGAKIG. Over residues 168–182 the composition is skewed to acidic residues; that stretch reads SSEESDSSSDEEEEK. Basic residues-rich tracts occupy residues 209-226, 242-254, 271-283, and 301-312; these read SKKSKKEKKEKKEKKSKK, KSKKSKKDRKSKS, KARKKEKKEKKRK, and SSKKSKKDKHKS. Over residues 313-324 the composition is skewed to low complexity; sequence PSTSKTSTKEST. Residues 325 to 334 are compositionally biased toward polar residues; that stretch reads PIVSESSGRS.

Belongs to the PINX1 family.

Its subcellular location is the nucleus. The protein localises to the nucleolus. Its function is as follows. Involved in rRNA-processing at A0, A1 and A2 sites and negatively regulates telomerase. This chain is Protein pxr1 (pxr1), found in Botryotinia fuckeliana (strain B05.10) (Noble rot fungus).